A 559-amino-acid polypeptide reads, in one-letter code: Suppressor of tumorigenicity 7 protein-like (559 aa).

The next 3 membrane-spanning stretches (helical) occupy residues 39–59 (GLAN…LYAL), 83–103 (FYVA…IFEW), and 513–533 (LPFF…IALL).

The protein belongs to the ST7 family.

It is found in the membrane. This Rattus norvegicus (Rat) protein is Suppressor of tumorigenicity 7 protein-like (St7l).